A 611-amino-acid chain; its full sequence is Lanthanide-dependent methanol dehydrogenase (611 aa).

The first 34 residues, 1–34 (MTVKLKKPKKYAVAKNATLLAAFGLIGSLSLAKA), serve as a signal peptide directing secretion. Cys-138 and Cys-139 are joined by a disulfide. Residues Arg-144, Thr-188, Ser-203, Gly-204, and Gly-205 each coordinate pyrroloquinoline quinone. A Ce(3+)-binding site is contributed by Glu-206. Residue Glu-206 participates in Eu(3+) binding. 2 residues coordinate pyrroloquinoline quinone: Thr-270 and Trp-272. Ce(3+)-binding residues include Asn-290, Asp-333, and Asp-335. Residues Asn-290, Asp-333, and Asp-335 each contribute to the Eu(3+) site. Arg-360 contacts pyrroloquinoline quinone. Cys-414 and Cys-443 are oxidised to a cystine. Residues Trp-501 and Trp-566 each coordinate pyrroloquinoline quinone.

It belongs to the bacterial PQQ dehydrogenase family. Homodimer. It depends on Ce(3+) as a cofactor. Requires La(3+) as cofactor. The cofactor is Nd(3+). Pr(3+) serves as cofactor. Eu(3+) is required as a cofactor. It depends on pyrroloquinoline quinone as a cofactor.

The protein resides in the periplasm. The enzyme catalyses 2 Fe(III)-[cytochrome cL] + methanol = 2 Fe(II)-[cytochrome cL] + formaldehyde + 2 H(+). It catalyses the reaction 4 Fe(III)-[cytochrome cL] + methanol + H2O = 4 Fe(II)-[cytochrome cL] + formate + 5 H(+). It carries out the reaction 2 Fe(III)-[cytochrome cL] + a primary alcohol = 2 Fe(II)-[cytochrome cL] + an aldehyde + 2 H(+). It participates in one-carbon metabolism; methanol degradation. Its function is as follows. Catalyzes the oxidation of methanol to formaldehyde or formate in the presence of lanthanides (Ln). Is a key enzyme in methane/methanol metabolism, allowing M.fumariolicum to grow on methane as the sole carbon and energy source. Can also act on other primary alcohols in vitro, such as ethanol, 1-propanol, 1-butanol, and 1-hexanol, but is not able to oxidize secondary alcohols and acetaldehyde. Uses a specific cytochrome cL, encoded by the adjacent gene in the locus, as electron acceptor. In Methylacidiphilum fumariolicum (strain SolV), this protein is Lanthanide-dependent methanol dehydrogenase.